The primary structure comprises 148 residues: MTERPFWQQKTLSEMSDDEWESLCDGCGQCCLHKLIDEDTEEIYFTNVACNQLNIKSCQCRNYEKRFEYEPDCIKLTRENLLTFNWLPATCAYRLIHEREDLPQWHPLVCGTKTAMHRERISVRHIAVRETEVVDWQDHILNKPEWAR.

Belongs to the UPF0260 family.

In Pectobacterium carotovorum subsp. carotovorum (strain PC1), this protein is UPF0260 protein PC1_1943.